The following is a 605-amino-acid chain: Capsid scaffolding protein (605 aa).

Residues His-48, Ser-116, and His-139 each act as charge relay system in the active site. The tract at residues 235 to 274 (ASDAPDLQKPDKALQSPPPASTDPATMLSGNAGEGATACG) is disordered. Residues 281–300 (QDLISVPRNTFMTLLQTNLD) form an interaction with pAP region. 2 disordered regions span residues 403–432 (DYVPAPSRSNKRKRDPEEDEEGGGLFPGED) and 489–588 (PHQS…KSVS). Positions 410–416 (RSNKRKR) match the Nuclear localization signal motif. The segment covering 568–579 (ASASGVAQSKEP) has biased composition (polar residues). The segment at 585-605 (KSVSAHLKSIFCEELLNKRVA) is interaction with major capsid protein.

Belongs to the herpesviridae capsid scaffolding protein family. As to quaternary structure, homomultimer. Interacts with major capsid protein. Exists in a monomer-dimer equilibrium with the dimer being the active species. Post-translationally, capsid scaffolding protein is cleaved by assemblin after formation of the spherical procapsid. As a result, the capsid obtains its mature, icosahedral shape. Cleavages occur at two or more sites: release (R-site) and maturation (M-site).

It localises to the host cytoplasm. The protein resides in the host nucleus. The enzyme catalyses Cleaves -Ala-|-Ser- and -Ala-|-Ala- bonds in the scaffold protein.. Acts as a scaffold protein by binding major capsid protein in the cytoplasm, inducing the nuclear localization of both proteins. Multimerizes in the nucleus such as major capsid protein forms the icosahedral T=16 capsid. Autocatalytic cleavage releases the assembly protein, and subsequently abolishes interaction with major capsid protein. Cleavages products are evicted from the capsid before or during DNA packaging. Functionally, protease that plays an essential role in virion assembly within the nucleus. Catalyzes the cleavage of the assembly protein after formation of the spherical procapsid. By that cleavage, the capsid matures and gains its icosahedral shape. The cleavage sites seem to include -Ala-Ser-, -Ala-Ala-, as well as Ala-Thr bonds. Assemblin and cleavages products are evicted from the capsid before or during DNA packaging. Its function is as follows. Plays a major role in capsid assembly. Acts as a scaffold protein by binding major capsid protein. Multimerizes in the nucleus such as major capsid protein forms the icosahedral T=16 capsid. Cleaved by assemblin after capsid completion. The cleavages products are evicted from the capsid before or during DNA packaging. The chain is Capsid scaffolding protein from Homo sapiens (Human).